A 149-amino-acid chain; its full sequence is Deoxyuridine 5'-triphosphate nucleotidohydrolase (149 aa).

Residues 68–70 (RSG), Asn-81, 85–87 (LID), and Met-95 each bind substrate.

It belongs to the dUTPase family. Mg(2+) serves as cofactor.

The enzyme catalyses dUTP + H2O = dUMP + diphosphate + H(+). Its pathway is pyrimidine metabolism; dUMP biosynthesis; dUMP from dCTP (dUTP route): step 2/2. This enzyme is involved in nucleotide metabolism: it produces dUMP, the immediate precursor of thymidine nucleotides and it decreases the intracellular concentration of dUTP so that uracil cannot be incorporated into DNA. The polypeptide is Deoxyuridine 5'-triphosphate nucleotidohydrolase (Herminiimonas arsenicoxydans).